The chain runs to 660 residues: Macrolide export ATP-binding/permease protein MacB (660 aa).

One can recognise an ABC transporter domain in the interval 10–248 (LVLENIVRKF…AKGQALQGKQ (239 aa)). Residue 46–53 (GASGSGKS) participates in ATP binding. 4 consecutive transmembrane segments (helical) span residues 285–305 (FLTM…VALG), 532–552 (ILTL…GIGV), 593–613 (IIGG…FVLF), and 625–645 (SIII…FSPA).

It belongs to the ABC transporter superfamily. Macrolide exporter (TC 3.A.1.122) family. Homodimer.

Its subcellular location is the cell inner membrane. Its function is as follows. Non-canonical ABC transporter that contains transmembrane domains (TMD), which form a pore in the inner membrane, and an ATP-binding domain (NBD), which is responsible for energy generation. Confers resistance against macrolides. In Bartonella quintana (strain Toulouse) (Rochalimaea quintana), this protein is Macrolide export ATP-binding/permease protein MacB.